The sequence spans 297 residues: Phosphoribosylaminoimidazole-succinocarboxamide synthase (297 aa).

It belongs to the SAICAR synthetase family.

The enzyme catalyses 5-amino-1-(5-phospho-D-ribosyl)imidazole-4-carboxylate + L-aspartate + ATP = (2S)-2-[5-amino-1-(5-phospho-beta-D-ribosyl)imidazole-4-carboxamido]succinate + ADP + phosphate + 2 H(+). It functions in the pathway purine metabolism; IMP biosynthesis via de novo pathway; 5-amino-1-(5-phospho-D-ribosyl)imidazole-4-carboxamide from 5-amino-1-(5-phospho-D-ribosyl)imidazole-4-carboxylate: step 1/2. The chain is Phosphoribosylaminoimidazole-succinocarboxamide synthase from Rhodococcus erythropolis (strain PR4 / NBRC 100887).